We begin with the raw amino-acid sequence, 382 residues long: MNLKEKTRALFAEIFGYPATHTIQAPGRVNLIGEHTDYNDGFVLPCAIDYQTVISCAPRDDRTVRVIAADYDNQVDEFSLEAPIVTHDSQQWSNYVRGVVKHLQQRNNAFGGVDMVISGNVPQGAGLSSSASLEVAVGTVFQQLYHLPLDGAQIALNGQEAENQFVGCNCGIMDQLISALGKKDHALLIDCRTLGAKAVSMPKGVAVVIINSNFKRTLVGSEYNTRREQCETGARFFQQPALRDVSLEAFNAVASELDPVVAKRVRHVLSENARTVEAASALEKGDLQRMGQLMAESHASMRDDFEITVPQIDTLVDIVKATIGDQGGVRMTGGGFGGCVVALIPEDLVPAVQQAVAQQYEAKTGIKETFYVCKPSQGAGQC.

34-37 (EHTD) lines the substrate pocket. ATP is bound at residue 124–130 (GAGLSSS). Mg(2+) contacts are provided by S130 and E162. D174 serves as the catalytic Proton acceptor. Y223 contributes to the substrate binding site.

The protein belongs to the GHMP kinase family. GalK subfamily.

The protein localises to the cytoplasm. The enzyme catalyses alpha-D-galactose + ATP = alpha-D-galactose 1-phosphate + ADP + H(+). It participates in carbohydrate metabolism; galactose metabolism. In terms of biological role, catalyzes the transfer of the gamma-phosphate of ATP to D-galactose to form alpha-D-galactose-1-phosphate (Gal-1-P). This Salmonella schwarzengrund (strain CVM19633) protein is Galactokinase.